The following is a 193-amino-acid chain: Ubiquitin-conjugating enzyme E2 E1 (193 aa).

A disordered region spans residues 1 to 45 (MSDDDSRASTSSSSSSSSNQQTEKETNTPKKKESKVSMSKNSKLL). Ser-2 bears the N-acetylserine mark. Over residues 8–18 (ASTSSSSSSSS) the composition is skewed to low complexity. The segment covering 22-35 (TEKETNTPKKKESK) has biased composition (basic and acidic residues). Over residues 36-45 (VSMSKNSKLL) the composition is skewed to polar residues. Positions 47 to 193 (TSAKRIQKEL…ARQWTKRYAT (147 aa)) constitute a UBC core domain. Cys-131 acts as the Glycyl thioester intermediate in catalysis. Residue Lys-136 forms a Glycyl lysine isopeptide (Lys-Gly) (interchain with G-Cter in ISG15) linkage.

It belongs to the ubiquitin-conjugating enzyme family. In terms of assembly, interacts with RNF14. ISGylation suppresses ubiquitin E2 enzyme activity. Post-translationally, autoubiquitinated in vitro.

The protein resides in the nucleus. The catalysed reaction is S-ubiquitinyl-[E1 ubiquitin-activating enzyme]-L-cysteine + [E2 ubiquitin-conjugating enzyme]-L-cysteine = [E1 ubiquitin-activating enzyme]-L-cysteine + S-ubiquitinyl-[E2 ubiquitin-conjugating enzyme]-L-cysteine.. It catalyses the reaction S-ubiquitinyl-[E1 ubiquitin-activating enzyme]-L-cysteine + [acceptor protein]-L-lysine = [E1 ubiquitin-activating enzyme]-L-cysteine + N(6)-monoubiquitinyl-[acceptor protein]-L-lysine.. It functions in the pathway protein modification; protein ubiquitination. Its function is as follows. Accepts ubiquitin from the E1 complex and catalyzes its covalent attachment to other proteins. Catalyzes the covalent attachment of ISG15 to other proteins. Mediates the selective degradation of short-lived and abnormal proteins. In vitro also catalyzes 'Lys-48'-linked polyubiquitination. Catalyzes monoubiquitination of other proteins in both an E3-dependent and E3-independent manner. In Homo sapiens (Human), this protein is Ubiquitin-conjugating enzyme E2 E1.